Consider the following 508-residue polypeptide: MGLPWYRVHTVVLNDPGRLLSVHIMHTALVAGWAGSMALYELAVFDPSDPVLDPMWRQGMFVIPFMTRLGITNSWGGWNITGGTITNPGLWSYEGVAGAHIVFSGLCFLAAIWHWVYWDLEIFCDERTGKPSLDLPKIFGIHLFLSGVACFGFGAFHVTGLYGPGIWVSDPYGLTGKVQPVNPAWGVEGFDPFVPGGIASHHIAAGTLGILAGLFHLSVRPPQRLYKGLRMGNIETVLSSSIAAVFFAAFVVAGTMWYGSATTPIELFGPTRYQWDQGYFQQEIYRRVSAGLAENQSLSDAWSKIPEKLAFYDYIGNNPAKGGLFRAGSMDNGDGIAVGWLGHPVFRNKEGRELFVRRMPTFFETFPVVLVDGDGIVRADVPFRRAESKYSVEQVGVTVEFYGGELNGVSYSDPATVKKYARRAQLGEIFELDRATLKSDGVFRSSPRGWFTFGHASFALLFFFGHIWHGARTLFRDVFAGIDPDLDAQVEFGAFQKLGDPTTKRQAV.

Helical transmembrane passes span Ser-21 to Ser-36, Ile-101 to Trp-115, Gly-140 to Phe-156, Ile-203 to Ser-218, Val-237 to Val-252, and Ser-457 to Arg-472.

This sequence belongs to the PsbB/PsbC family. PsbB subfamily. In terms of assembly, PSII is composed of 1 copy each of membrane proteins PsbA, PsbB, PsbC, PsbD, PsbE, PsbF, PsbH, PsbI, PsbJ, PsbK, PsbL, PsbM, PsbT, PsbX, PsbY, PsbZ, Psb30/Ycf12, at least 3 peripheral proteins of the oxygen-evolving complex and a large number of cofactors. It forms dimeric complexes. It depends on Binds multiple chlorophylls. PSII binds additional chlorophylls, carotenoids and specific lipids. as a cofactor.

It is found in the plastid. The protein resides in the chloroplast thylakoid membrane. Its function is as follows. One of the components of the core complex of photosystem II (PSII). It binds chlorophyll and helps catalyze the primary light-induced photochemical processes of PSII. PSII is a light-driven water:plastoquinone oxidoreductase, using light energy to abstract electrons from H(2)O, generating O(2) and a proton gradient subsequently used for ATP formation. The chain is Photosystem II CP47 reaction center protein from Olimarabidopsis pumila (Dwarf rocket).